The sequence spans 215 residues: Glutathione S-transferase stcT (215 aa).

Residues 2 to 82 form the GST N-terminal domain; the sequence is PFGTLYTRPF…YDSNTTLLGT (81 aa). 2 residues coordinate glutathione: Lys52 and Glu66. Lys52 is a substrate binding site. Positions 83 to 211 constitute a GST C-terminal domain; it reads TGQEYASIIR…PVLAEYEMPI (129 aa).

It belongs to the GST superfamily. Glutathione is required as a cofactor.

The protein operates within mycotoxin biosynthesis; sterigmatocystin biosynthesis. Its function is as follows. Glutathione S-transferase; part of the gene cluster that mediates the biosynthesis of sterigmatocystin (ST), a polyketide-derived furanocoumarin which is part of the most toxic and carcinogenic compounds among the known mycotoxins. The first step in the biosynthesis of sterigmatocystin is the production of hexanoate by the fatty acid synthase (FAS) units stcJ and stcK. The polyketide backbone is assembled by the non-reducing polyketide synthase stcA by condensation of the starter hexanoyl-CoA and 7 malonyl-CoA extender units followed by cyclization and release of norsolorinic acid. Norsolorinic acid is the first stable intermediate in the biosynthesis of sterigmatocystin and is converted into averantin (AVN) by the ketoreductase stcE which reduces the hexanoate ketone to an alcohol. Averantin is then oxidized into 5'-hydroxyaverantin (HAVN) by the cytochrome P450 monooxygenase stcF. 5'-hydroxyaverantin is further converted to 5'-oxyaverantin (OAVN) by the 5'-hydroxyaverantin dehydrogenase stcG. The next step is the conversion of OAVN into averufin (AVF) which is catalyzed by a yet to be identified enzyme. The cytochrome P450 monooxygenase stcB and the flavin-binding monooxygenase stcW are both required for the conversion of averufin to 1-hydroxyversicolorone. The esterase stcI probably catalyzes the formation of versiconal hemiacetal acetate from 1-hydroxyversicolorone. The oxydoreductase stcN then probably catalyzes the biosynthetic step from versiconal to versicolorin B (VERB). The next step is performed by the versicolorin B desaturase stcL to produce versicolorin A (VERA). The ketoreductase stcU and the cytochrome P450 monooxygenase stcS are involved in the conversion of versicolorin A to demethylsterigmatocystin. The Baeyer-Villiger oxidas stcQ and the reductase stcR might be involved in the biosynthetic step from versicolorin A to demethylsterigmatocystin. The final step in the biosynthesis of sterigmatocystin is the methylation of demethylsterigmatocystin catalyzed by the methyltransferase stcP. The sequence is that of Glutathione S-transferase stcT from Emericella nidulans (strain FGSC A4 / ATCC 38163 / CBS 112.46 / NRRL 194 / M139) (Aspergillus nidulans).